A 367-amino-acid polypeptide reads, in one-letter code: MPRPILATIHSAALRHNLERVRQAVPDAKLWAVVKANAYGHGIENVFEALRGADGFAMLDLAEAERVRQLGWRGPILLLEGVFEPRDLELCSRLSIWHAVHCDAQIDWLAAHKTQNGHRVFLKMNSGMNRLGFTPERYRAAWARLNALPQVEEISFMTHFSDADAGAGQPGISAQLQRFHDATRDLPGERSVGNSAATLRQGDDALVRCDWVRPGIVLYGSSPDYPQHTAAHWDLQPTQTLSSRIIGVQQLTEGQSVGYGSRFTAEGPLRLGTVACGYADGYPRHCGTGTPVLVNGVRTRTLGCVSMDMLAVDLTPVPDAGMGSEVTLWGRASNGAVLPIDEVAEAAGTLGYELMCAVAPRVNKTID.

Lysine 35 (proton acceptor; specific for D-alanine) is an active-site residue. At lysine 35 the chain carries N6-(pyridoxal phosphate)lysine. Position 130 (arginine 130) interacts with substrate. Tyrosine 259 serves as the catalytic Proton acceptor; specific for L-alanine. Position 307 (methionine 307) interacts with substrate.

The protein belongs to the alanine racemase family. Pyridoxal 5'-phosphate serves as cofactor.

It carries out the reaction L-alanine = D-alanine. Its pathway is amino-acid biosynthesis; D-alanine biosynthesis; D-alanine from L-alanine: step 1/1. Its function is as follows. Catalyzes the interconversion of L-alanine and D-alanine. May also act on other amino acids. The sequence is that of Alanine racemase (alr) from Delftia acidovorans (strain DSM 14801 / SPH-1).